We begin with the raw amino-acid sequence, 264 residues long: uncharacterized protein (264 aa).

A signal peptide spans 1-22 (MGYLKKLALFISVIILGIFIIG). The N-palmitoyl cysteine moiety is linked to residue Cys-23. Residue Cys-23 is the site of S-diacylglycerol cysteine attachment.

It belongs to the staphylococcal tandem lipoprotein family.

It is found in the cell membrane. This is an uncharacterized protein from Staphylococcus aureus (strain N315).